The following is a 170-amino-acid chain: Capsid protein (170 aa).

The segment covering 1–19 has biased composition (basic residues); sequence MAQLRWGRKGVRSQRRKYS. The segment at 1–25 is disordered; that stretch reads MAQLRWGRKGVRSQRRKYSRPVAYK.

The protein belongs to the nanoviridae capsid protein family.

It localises to the virion. This chain is Capsid protein (DNA-S), found in Subterranean clover stunt virus (strain J) (SCSV).